We begin with the raw amino-acid sequence, 324 residues long: Glutathione synthetase (324 aa).

Positions 129 to 313 (KLYALHFPDL…LEDEIVDWLV (185 aa)) constitute an ATP-grasp domain. 155 to 211 (VDIHGRAVIKPLDGKGGEGIFLLARADRNLNAIIEASTAYGTRHVMVQRYLEESRQG) provides a ligand contact to ATP. Glu284 and Asn286 together coordinate Mg(2+).

This sequence belongs to the prokaryotic GSH synthase family. Mg(2+) serves as cofactor. Requires Mn(2+) as cofactor.

It catalyses the reaction gamma-L-glutamyl-L-cysteine + glycine + ATP = glutathione + ADP + phosphate + H(+). It functions in the pathway sulfur metabolism; glutathione biosynthesis; glutathione from L-cysteine and L-glutamate: step 2/2. This chain is Glutathione synthetase, found in Gloeobacter violaceus (strain ATCC 29082 / PCC 7421).